A 478-amino-acid chain; its full sequence is MSVKIGEISYKERIDKGIDNDFMRQAVSSAQGRFRKGRLSQAEELGNWEDWRQLGSEIRTHTLENIDYYLHQLSEQVEKRGGNVFFAQTAEEANEYIENVVKKKQAKKVVKTKSMVTEEIGLNEALEKSGAEVVESDLGEWILQLDEDPPSHIVTPALHKNRQQIRETFADKRGYDKTDSPEELAAFAREQLRQDFLTADVGITGCNFAIAESGAITLVTNEGNAEMVTSLPDTQITVMGMERLVPTWEDMEVLVSLLTRAAVGQKLTSYITAYTGARLEEEIDGPDDYHLVIVDNGRSKILGTEFQSALHCIRCAACINVCPVYRHVGGHAYNSIYPGPIGAVLTPLLDGYDDHKELPYASSLCAACTEACPVKIPLHEQLIRHREIIVEKEKKSPVSEKIMMKGFAQWASNPAAYKLSTKVARTALKPWTKDEFVENGPGPLKGWTDVRDFPAPGKQSFRAWWSERAKGEKQNGNS.

4Fe-4S ferredoxin-type domains follow at residues 303 to 333 and 352 to 381; these read GTEF…GHAY and YDDH…LHEQ. Residues C312, C315, C318, C322, C365, C368, and C372 each coordinate [4Fe-4S] cluster.

It belongs to the LutB/YkgF family.

In terms of biological role, is involved in L-lactate degradation and allows cells to grow with lactate as the sole carbon source. Has probably a role as an electron transporter during oxidation of L-lactate. In Oceanobacillus iheyensis (strain DSM 14371 / CIP 107618 / JCM 11309 / KCTC 3954 / HTE831), this protein is Lactate utilization protein B.